The sequence spans 568 residues: Pentatricopeptide repeat-containing protein At1g73400, mitochondrial (568 aa).

A mitochondrion-targeting transit peptide spans 1–55 (MMRRLVSYFVRSRFSLHLSTTPPQRSALFSHILSSHLDSIQINKKISSFSVHRFC). PPR repeat units follow at residues 233–263 (EINA…MRHR), 267–301 (DANT…GHKP), 302–336 (ENFT…GSAV), 340–374 (TAKT…GCLP), 375–409 (DVST…GYPP), 410–444 (DIVT…RCAP), 445–479 (SVQT…DCVQ), and 480–514 (DVET…GLKL).

This sequence belongs to the PPR family. P subfamily.

It is found in the mitochondrion. This is Pentatricopeptide repeat-containing protein At1g73400, mitochondrial from Arabidopsis thaliana (Mouse-ear cress).